A 261-amino-acid chain; its full sequence is Putative quercetin 2,3-dioxygenase Ta0133 (261 aa).

The a divalent metal cation site is built by His17, His19, His61, and Glu63.

Belongs to the pirin family. It depends on a divalent metal cation as a cofactor.

The enzyme catalyses quercetin + O2 = 2-(3,4-dihydroxybenzoyloxy)-4,6-dihydroxybenzoate + CO. Its pathway is flavonoid metabolism; quercetin degradation. In terms of biological role, putative quercetin 2,3-dioxygenase. The polypeptide is Putative quercetin 2,3-dioxygenase Ta0133 (Thermoplasma acidophilum (strain ATCC 25905 / DSM 1728 / JCM 9062 / NBRC 15155 / AMRC-C165)).